Reading from the N-terminus, the 495-residue chain is Alpha-1B-glycoprotein (495 aa).

The N-terminal stretch at 1-21 is a signal peptide; sequence MSMLVVFLLLWGVTWGPVTEA. 5 consecutive Ig-like V-type domains span residues 22–113, 114–206, 207–299, 300–397, and 398–495; these read AIFY…LTGP, KSLP…ELAA, PPPP…PVEL, ILSD…LHVD, and GPPP…VAES. N44 is a glycosylation site (N-linked (GlcNAc...) (complex) asparagine). 5 disulfides stabilise this stretch: C49–C93, C139–C182, C232–C279, C325–C374, and C423–C470. Residue N179 is glycosylated (N-linked (GlcNAc...) asparagine). 2 N-linked (GlcNAc...) asparagine glycosylation sites follow: N363 and N371.

Interacts with CRISP3. Plasma.

It localises to the secreted. This is Alpha-1B-glycoprotein (A1BG) from Homo sapiens (Human).